The chain runs to 361 residues: 4-oxalomesaconate tautomerase (361 aa).

The protein belongs to the PrpF family.

It catalyses the reaction (1E)-4-oxobut-1-ene-1,2,4-tricarboxylate = 4-carboxy-2-hydroxy-cis,cis-muconate. In terms of biological role, catalyzes the tautomerization of the 4-oxalomesaconic acid keto (OMAketo) generated by GalA dioxygenase to 4-oxalomesaconic acid enol (OMAenol). Mediates the second step in gallate degradation pathway. This chain is 4-oxalomesaconate tautomerase (galD), found in Pseudomonas putida (strain ATCC 47054 / DSM 6125 / CFBP 8728 / NCIMB 11950 / KT2440).